We begin with the raw amino-acid sequence, 382 residues long: LIM homeobox transcription factor 1-alpha (382 aa).

2 LIM zinc-binding domains span residues 33–92 and 92–154; these read SVCE…LFAV and VKCG…EREL. Disordered regions lie at residues 161–208 and 252–285; these read AASD…QQRR and KLARRQQQQQQDQQNTQRLSSAQTNGGGSAGMEG. The segment at residues 195–254 is a DNA-binding region (homeobox); that stretch reads PKRPRTILTTQQRRAFKASFEVSSKPCRKVRETLAAETGLSVRVVQVWFQNQRAKMKKLA. Positions 256 to 269 are enriched in low complexity; it reads RQQQQQQDQQNTQR.

Isoform 1 is expressed in many tissues. Not found in heart, liver, spleen and testis. Relatively highly expressed in fetal brain. Isoform LMX1A-4AB is expressed in testis.

It is found in the nucleus. Acts as a transcriptional activator by binding to an A/T-rich sequence, the FLAT element, in the insulin gene promoter. Required for development of the roof plate and, in turn, for specification of dorsal cell fates in the CNS and developing vertebrae. This is LIM homeobox transcription factor 1-alpha (LMX1A) from Homo sapiens (Human).